The following is a 341-amino-acid chain: Sphingolipid long chain base-responsive protein LSP1 (341 aa).

Over residues 1 to 11 (MHRTYSLRNQR) the composition is skewed to polar residues. The tract at residues 1–32 (MHRTYSLRNQRAPTAAELQAPPPPPSSTKSKF) is disordered. Thr-233 is modified (phosphothreonine). Composition is skewed to acidic residues over residues 282 to 294 (YEDE…EEPE) and 305 to 323 (VEEE…DEAH). Positions 282 to 341 (YEDEDGEEEEEPEIQNGDIPGQVVEEEEVEWTTEVPVDDEAHEADHHVSQNGHTSGSENI) are disordered. Residues 330–341 (SQNGHTSGSENI) show a composition bias toward polar residues.

Phosphorylated by PKH1 and PKH2. Phosphorylation is stimulated by sphingolipid long chain bases (LCBs). Post-translationally, N-glycosylated.

It is found in the cytoplasm. Its subcellular location is the cell cortex. Functionally, together with PIL1, main component of eisosomes, structures at the cell periphery underneath the plasma membrane that mark the site of endocytosis. Negative regulator of cell wall integrity (CWI) in unstressed cells, probably by inhibiting protein kinase PKH1/PHK2 activity and regulating their downstream CWI pathways PKC1-MAP kinase pathway and protein kinase YPK1 pathway. Activity may be regulated by the transient increase of sphingolipid long chain bases (LCBs) during heat stress. This chain is Sphingolipid long chain base-responsive protein LSP1 (LSP1), found in Saccharomyces cerevisiae (strain ATCC 204508 / S288c) (Baker's yeast).